A 223-amino-acid chain; its full sequence is Ubiquitin carboxyl-terminal hydrolase isozyme L1 (223 aa).

Residue methionine 1 is modified to N-acetylmethionine. The 220-residue stretch at 2–221 (QLKPMEINPE…VRFSAVALCK (220 aa)) folds into the UCH catalytic domain. The segment at 5 to 10 (PMEINP) is interaction with ubiquitin. Cysteine 90 (nucleophile) is an active-site residue. The residue at position 125 (serine 125) is a Phosphoserine. The Proton donor role is filled by histidine 161. Positions 211 to 216 (EVRFSA) are interaction with ubiquitin. Cysteine 220 carries the S-farnesyl cysteine lipid modification. Residues 221–223 (KCA) constitute a propeptide, removed in mature form.

Belongs to the peptidase C12 family. Monomer. Homodimer. Interacts with COPS5 and SNCA. Post-translationally, O-glycosylated.

The protein resides in the cytoplasm. It is found in the endoplasmic reticulum membrane. It carries out the reaction Thiol-dependent hydrolysis of ester, thioester, amide, peptide and isopeptide bonds formed by the C-terminal Gly of ubiquitin (a 76-residue protein attached to proteins as an intracellular targeting signal).. Functionally, ubiquitin-protein hydrolase involved both in the processing of ubiquitin precursors and of ubiquitinated proteins. This enzyme is a thiol protease that recognizes and hydrolyzes a peptide bond at the C-terminal glycine of ubiquitin. Also binds to free monoubiquitin and may prevent its degradation in lysosomes. The homodimer may have ATP-independent ubiquitin ligase activity. This chain is Ubiquitin carboxyl-terminal hydrolase isozyme L1 (UCHL1), found in Monodelphis domestica (Gray short-tailed opossum).